A 177-amino-acid chain; its full sequence is MEHRGVTVWFTGLSGAGKTTISHALAERLKAAGCKLEILDGDIVRTNLTKGLGFSKEDRDENIRRIGFVSHLLTRNGVIVFVSAISPYREIREEVRQRIGDFVEIFVNAPLEECERRDVKGLYQRARAGEIKGFTGIDDPYEAPTNPEVECRTDLEELEESIEKVMKKLTELGYITP.

ATP is bound at residue 12–19 (GLSGAGKT). S86 serves as the catalytic Phosphoserine intermediate.

The protein belongs to the APS kinase family.

It catalyses the reaction adenosine 5'-phosphosulfate + ATP = 3'-phosphoadenylyl sulfate + ADP + H(+). It participates in sulfur metabolism; hydrogen sulfide biosynthesis; sulfite from sulfate: step 2/3. Functionally, catalyzes the synthesis of activated sulfate. The polypeptide is Adenylyl-sulfate kinase (Picosynechococcus sp. (strain ATCC 27264 / PCC 7002 / PR-6) (Agmenellum quadruplicatum)).